The following is a 598-amino-acid chain: Elongation factor 4 (598 aa).

A tr-type G domain is found at 3-185; sequence QHIRNFSIIA…MIVARIPPPE (183 aa). GTP contacts are provided by residues 15–20 and 132–135; these read DHGKST and NKID.

It belongs to the TRAFAC class translation factor GTPase superfamily. Classic translation factor GTPase family. LepA subfamily.

The protein resides in the cell inner membrane. It carries out the reaction GTP + H2O = GDP + phosphate + H(+). Functionally, required for accurate and efficient protein synthesis under certain stress conditions. May act as a fidelity factor of the translation reaction, by catalyzing a one-codon backward translocation of tRNAs on improperly translocated ribosomes. Back-translocation proceeds from a post-translocation (POST) complex to a pre-translocation (PRE) complex, thus giving elongation factor G a second chance to translocate the tRNAs correctly. Binds to ribosomes in a GTP-dependent manner. This Nitrosomonas eutropha (strain DSM 101675 / C91 / Nm57) protein is Elongation factor 4.